The following is a 171-amino-acid chain: NADH-quinone oxidoreductase subunit I (171 aa).

2 consecutive 4Fe-4S ferredoxin-type domains span residues 41–71 (LTRD…VVKT) and 81–110 (ESFT…LTPD). [4Fe-4S] cluster-binding residues include Cys-51, Cys-54, Cys-57, Cys-61, Cys-90, Cys-93, Cys-96, and Cys-100.

This sequence belongs to the complex I 23 kDa subunit family. In terms of assembly, NDH-1 is composed of 13 different subunits. Subunits NuoA, H, J, K, L, M, N constitute the membrane sector of the complex. [4Fe-4S] cluster serves as cofactor.

It localises to the cell inner membrane. The enzyme catalyses a quinone + NADH + 5 H(+)(in) = a quinol + NAD(+) + 4 H(+)(out). Functionally, NDH-1 shuttles electrons from NADH, via FMN and iron-sulfur (Fe-S) centers, to quinones in the respiratory chain. The immediate electron acceptor for the enzyme in this species is believed to be ubiquinone. Couples the redox reaction to proton translocation (for every two electrons transferred, four hydrogen ions are translocated across the cytoplasmic membrane), and thus conserves the redox energy in a proton gradient. The protein is NADH-quinone oxidoreductase subunit I of Shewanella woodyi (strain ATCC 51908 / MS32).